A 1338-amino-acid polypeptide reads, in one-letter code: Phosphoribosylformylglycinamidine synthase (1338 aa).

Phosphoserine is present on Ser-215. ATP contacts are provided by residues 322–333 and 402–404; these read GATTGTGGRIRD and AGF. At Ser-569 the chain carries Phosphoserine. Residues Thr-619 and Thr-623 each carry the phosphothreonine modification. Ala-706 contributes to the ATP binding site. Mg(2+)-binding residues include Asp-707, Glu-746, Asn-750, and Asp-909. Residue Ser-911 participates in ATP binding. Residues 1064 to 1302 form the Glutamine amidotransferase type-1 domain; the sequence is RVAILREEGS…AVMPHPERAV (239 aa). The active-site Nucleophile is Cys-1158. Residues His-1297 and Glu-1299 contribute to the active site.

In the N-terminal section; belongs to the FGAMS family.

It localises to the cytoplasm. The catalysed reaction is N(2)-formyl-N(1)-(5-phospho-beta-D-ribosyl)glycinamide + L-glutamine + ATP + H2O = 2-formamido-N(1)-(5-O-phospho-beta-D-ribosyl)acetamidine + L-glutamate + ADP + phosphate + H(+). It functions in the pathway purine metabolism; IMP biosynthesis via de novo pathway; 5-amino-1-(5-phospho-D-ribosyl)imidazole from N(2)-formyl-N(1)-(5-phospho-D-ribosyl)glycinamide: step 1/2. Functionally, phosphoribosylformylglycinamidine synthase involved in the purines biosynthetic pathway. Catalyzes the ATP-dependent conversion of formylglycinamide ribonucleotide (FGAR) and glutamine to yield formylglycinamidine ribonucleotide (FGAM) and glutamate. The sequence is that of Phosphoribosylformylglycinamidine synthase (PFAS) from Homo sapiens (Human).